A 259-amino-acid polypeptide reads, in one-letter code: 3'-5' ssDNA/RNA exonuclease TatD (259 aa).

A divalent metal cation contacts are provided by glutamate 92, histidine 128, and histidine 153.

This sequence belongs to the metallo-dependent hydrolases superfamily. TatD-type hydrolase family. TatD subfamily. In terms of assembly, monomer. Mg(2+) is required as a cofactor.

It localises to the cytoplasm. Functionally, 3'-5' exonuclease that prefers single-stranded DNA and RNA. May play a role in the H(2)O(2)-induced DNA damage repair. The chain is 3'-5' ssDNA/RNA exonuclease TatD from Erwinia tasmaniensis (strain DSM 17950 / CFBP 7177 / CIP 109463 / NCPPB 4357 / Et1/99).